Reading from the N-terminus, the 459-residue chain is Disease resistance protein CHL1 (459 aa).

The 155-residue stretch at 16–170 (REVDVFLSFC…QIARDISLVV (155 aa)) folds into the TIR domain. The active site involves Glu89. An NB-ARC domain is found at 191–401 (VYDLLALEVN…LLKLKAKQGG (211 aa)). Basic and acidic residues predominate over residues 429-440 (ERKESSQDKSQQ). A disordered region spans residues 429-459 (ERKESSQDKSQQESEVAADILIGKESSQDKQ).

Mostly expressed in leaves, stems and roots, and, to a lower extent, in flowers and siliques.

Its subcellular location is the cytoplasm. The catalysed reaction is NAD(+) + H2O = ADP-D-ribose + nicotinamide + H(+). Functionally, confers resistance to low temperatures by limiting chloroplast damage and cell death, thus maintaining growth homeostasis. The sequence is that of Disease resistance protein CHL1 from Arabidopsis thaliana (Mouse-ear cress).